A 944-amino-acid polypeptide reads, in one-letter code: Lactoferrin-binding protein A (944 aa).

The signal sequence occupies residues 1–27 (MNKKHGFSLTLTALAIAAAFPSYAANP). In terms of domain architecture, TBDR plug spans 52–178 (RRSKEATGLG…LGGAVAFRTK (127 aa)). Residues 189-944 (SWGIQAKTAY…NFSLALEMKF (756 aa)) enclose the TBDR beta-barrel domain. Residues 927–944 (GRYAAPGRNFSLALEMKF) carry the TonB C-terminal box motif.

This sequence belongs to the TonB-dependent receptor family.

It is found in the cell outer membrane. Functionally, unknown. May be an iron-siderophore receptor. The protein is Lactoferrin-binding protein A (lbpA) of Neisseria meningitidis serogroup A / serotype 4A (strain DSM 15465 / Z2491).